Consider the following 66-residue polypeptide: COP-associated protein (66 aa).

In terms of domain architecture, HMA spans 1–66 (MKATFQVPSI…ALLDAGQEVV (66 aa)). 2 residues coordinate Cu cation: C12 and C15. Residues C12 and C15 are joined by a disulfide bond.

Its function is as follows. Part of a cation-transporting system which is associated with copper export out of the H.pylori cells. This is COP-associated protein (copP) from Helicobacter pylori (strain ATCC 700392 / 26695) (Campylobacter pylori).